The sequence spans 121 residues: Large ribosomal subunit protein bL17 (121 aa).

The protein belongs to the bacterial ribosomal protein bL17 family. As to quaternary structure, part of the 50S ribosomal subunit. Contacts protein L32.

The sequence is that of Large ribosomal subunit protein bL17 from Rubrobacter xylanophilus (strain DSM 9941 / JCM 11954 / NBRC 16129 / PRD-1).